The chain runs to 59 residues: Large ribosomal subunit protein uL30 (59 aa).

The protein belongs to the universal ribosomal protein uL30 family. In terms of assembly, part of the 50S ribosomal subunit.

This chain is Large ribosomal subunit protein uL30, found in Haemophilus influenzae (strain 86-028NP).